Here is a 527-residue protein sequence, read N- to C-terminus: MADNRDPASDQMKHWKEQRAAQKPDVLTTGGGNPVGDKLNSLTVGPRGPLLVQDVVFTDEMAHFDRERIPERVVHAKGAGAFGYFEVTHDITRYSKAKVFEHIGKRTPIAVRFSTVAGESGSADTVRDPRGFAVKFYTEDGNWDLVGNNTPIFFIRDALLFPSFIHSQKRNPQTHLKDPDMVWDFWSLRPESLHQVSFLFSDRGIPDGHRHMNGYGSHTFKLVNANGEAVYCKFHYKTDQGIKNLSVEDAARLAHEDPDYGLRDLFNAIATGNYPSWTLYIQVMTFSEAEIFPFNPFDLTKVWPHGDYPLIPVGKLVLNRNPVNYFAEVEQLAFDPSNMPPGIEPSPDKMLQGRLFAYPDTHRHRLGPNYLQIPVNCPYRARVANYQRDGPMCMMDNQGGAPNYYPNSFSAPEHQPSALEHRTHFSGDVQRFNSANDDNVTQVRTFYLKVLNEEQRKRLCENIAGHLKDAQLFIQKKAVKNFSDVHPEYGSRIQALLDKYNEEKPKNAVHTYVQHGSHLSAREKANL.

The segment covering 1 to 22 has biased composition (basic and acidic residues); it reads MADNRDPASDQMKHWKEQRAAQ. The disordered stretch occupies residues 1–42; it reads MADNRDPASDQMKHWKEQRAAQKPDVLTTGGGNPVGDKLNSL. The residue at position 2 (alanine 2) is a Blocked amino end (Ala); alternate. N-acetylalanine; alternate is present on alanine 2. At serine 9 the chain carries Phosphoserine. An N6-succinyllysine modification is found at lysine 13. Catalysis depends on residues histidine 75 and asparagine 148. The NADP(+) site is built by histidine 194, phenylalanine 198, serine 201, arginine 203, asparagine 213, and tyrosine 215. Lysine 221 bears the N6-succinyllysine mark. Position 233 is an N6-acetyllysine (lysine 233). 3 residues coordinate NADP(+): lysine 237, tryptophan 303, and histidine 305. Residue tyrosine 358 coordinates heme. 2 positions are modified to phosphoserine: serine 417 and serine 434. NADP(+) is bound by residues glutamine 442, threonine 445, and phenylalanine 446. Lysine 449 and lysine 480 each carry N6-acetyllysine; alternate. N6-succinyllysine; alternate is present on residues lysine 449 and lysine 480. Lysine 499 bears the N6-acetyllysine mark. Phosphothreonine is present on threonine 511. Serine 517 carries the phosphoserine modification. Positions 524–527 match the Microbody targeting signal; atypical motif; sequence KANL.

The protein belongs to the catalase family. As to quaternary structure, homotetramer. Interacts (via microbody targeting signal) with PEX5, monomeric form interacts with PEX5, leading to its translocation into peroxisomes. The cofactor is heme. NADP(+) serves as cofactor.

It localises to the peroxisome matrix. The enzyme catalyses 2 H2O2 = O2 + 2 H2O. Its function is as follows. Catalyzes the degradation of hydrogen peroxide (H(2)O(2)) generated by peroxisomal oxidases to water and oxygen, thereby protecting cells from the toxic effects of hydrogen peroxide. Promotes growth of cells including T-cells, B-cells, myeloid leukemia cells, melanoma cells, mastocytoma cells and normal and transformed fibroblast cells. The sequence is that of Catalase (CAT) from Bos taurus (Bovine).